Here is a 425-residue protein sequence, read N- to C-terminus: Aromatic prenyl transferase ptmE (425 aa).

Residues 83–84 (GI) and E92 contribute to the L-tryptophan site. Substrate-binding residues include R107, K198, Y200, R265, K267, Y269, Y345, Y410, and Y414.

Belongs to the tryptophan dimethylallyltransferase family. Homodimer.

It functions in the pathway secondary metabolite biosynthesis. Aromatic prenyl transferase; part of the gene cluster that mediates the biosynthesis of the indole diterpenes penitrems. The geranylgeranyl diphosphate (GGPP) synthase ptmG catalyzes the first step in penitrem biosynthesis via conversion of farnesyl pyrophosphate and isopentyl pyrophosphate into geranylgeranyl pyrophosphate (GGPP). Condensation of indole-3-glycerol phosphate with GGPP by the prenyl transferase ptmC then forms 3-geranylgeranylindole (3-GGI). Epoxidation by the FAD-dependent monooxygenase ptmM leads to a epoxidized-GGI that is substrate of the terpene cyclase ptmB for cyclization to yield paspaline. Paspaline is subsequently converted to 13-desoxypaxilline by the cytochrome P450 monooxygenase ptmP, the latter being then converted to paxilline by the cytochrome P450 monooxygenase ptmQ. Paxilline is converted to beta-paxitriol via C-10 ketoreduction by the short-chain dehydrogenase ptmH which can be monoprenylated at the C-20 by the indole diterpene prenyltransferase ptmD. A two-step elimination (acetylation and elimination) process performed by the O-acetyltransferase ptmV and ptmI leads to the production of the prenylated form of penijanthine. The FAD-linked oxidoreductase ptmO then converts the prenylated form of penijanthine into PC-M5 which is in turn transformed into PC-M4 by the aromatic dimethylallyltransferase ptmE. Five sequential oxidative transformations performed by the cytochrome P450 monooxygenases ptmK, ptmU, ptmL, ptmN and ptmJ yield the various penitrem compounds. PtmK, ptmU and ptmM are involved in the formation of the key bicyclic ring of penitrem C via the formation of the intermediates secopenitrem D and penitrem D. PtmL catalyzes the epoxidation of penitrem D and C to yield penitrem B and F, respectively. PtmJ catalyzes the last benzylic hydroxylation to convert penitrem B to prenitrem E and penitrem F to penitrem A. In Penicillium ochrochloron, this protein is Aromatic prenyl transferase ptmE.